We begin with the raw amino-acid sequence, 338 residues long: Lipoate-protein ligase A (338 aa).

The 188-residue stretch at 29–216 folds into the BPL/LPL catalytic domain; it reads PATQRVLFLW…AFFAHYGERV (188 aa). Residues Arg71, 76 to 79, and Lys134 contribute to the ATP site; that span reads GAVF. A (R)-lipoate-binding site is contributed by Lys134.

The protein belongs to the LplA family. Monomer.

The protein localises to the cytoplasm. It carries out the reaction L-lysyl-[lipoyl-carrier protein] + (R)-lipoate + ATP = N(6)-[(R)-lipoyl]-L-lysyl-[lipoyl-carrier protein] + AMP + diphosphate + H(+). It participates in protein modification; protein lipoylation via exogenous pathway; protein N(6)-(lipoyl)lysine from lipoate: step 1/2. It functions in the pathway protein modification; protein lipoylation via exogenous pathway; protein N(6)-(lipoyl)lysine from lipoate: step 2/2. Catalyzes both the ATP-dependent activation of exogenously supplied lipoate to lipoyl-AMP and the transfer of the activated lipoyl onto the lipoyl domains of lipoate-dependent enzymes. The protein is Lipoate-protein ligase A of Escherichia coli (strain K12 / MC4100 / BW2952).